Consider the following 434-residue polypeptide: F-box/kelch-repeat protein At1g55270 (434 aa).

In terms of domain architecture, F-box spans 76–122 (PPLLPGLPDDLAVACLIRVPRAEHRKLRLVCKRWYRLASGNFFYSQR). Kelch repeat units follow at residues 129-178 (EEWV…VLSG), 180-227 (HLYL…VINN), 229-276 (LYVA…VYDK), 278-321 (WFLK…SLNG), and 325-371 (GLDC…LHNK).

The protein is F-box/kelch-repeat protein At1g55270 of Arabidopsis thaliana (Mouse-ear cress).